Consider the following 277-residue polypeptide: Sulfur carrier protein FdhD (277 aa).

C121 (cysteine persulfide intermediate) is an active-site residue. 260 to 265 (FCKPGR) is a binding site for Mo-bis(molybdopterin guanine dinucleotide).

Belongs to the FdhD family.

Its subcellular location is the cytoplasm. Required for formate dehydrogenase (FDH) activity. Acts as a sulfur carrier protein that transfers sulfur from IscS to the molybdenum cofactor prior to its insertion into FDH. This is Sulfur carrier protein FdhD from Shigella dysenteriae serotype 1 (strain Sd197).